Reading from the N-terminus, the 140-residue chain is Actin-depolymerizing factor 8 (140 aa).

Residue Ser6 is modified to Phosphoserine. The ADF-H domain maps to 7 to 139 (GMHVNDECKI…SLDIIKGRLN (133 aa)).

This sequence belongs to the actin-binding proteins ADF family. As to expression, expressed in the root trichoblast cells and developed root hairs.

Its subcellular location is the cytoplasm. It localises to the cytoskeleton. Actin-depolymerizing protein. Severs actin filaments (F-actin) and binds to actin monomers. The polypeptide is Actin-depolymerizing factor 8 (ADF8) (Arabidopsis thaliana (Mouse-ear cress)).